Consider the following 66-residue polypeptide: Gallinacin-5 (66 aa).

The signal sequence occupies residues 1 to 19; that stretch reads MQILTLLFAVLLLMLRAEP. Residues 20-25 constitute a propeptide that is removed on maturation; sequence GLSLAR. 3 disulfide bridges follow: Cys-31/Cys-59, Cys-38/Cys-53, and Cys-43/Cys-60.

The protein belongs to the beta-defensin family. In terms of tissue distribution, strong expression in the tongue and bone marrow. Low expression in the esophagus, trachea, lung, brain and ovary. Expressed in the ovarian stroma, but not in the ovarian follicles.

It localises to the secreted. It is found in the cytoplasmic granule. Its function is as follows. Has bactericidal activity. This chain is Gallinacin-5 (GAL5), found in Gallus gallus (Chicken).